The chain runs to 405 residues: Na(+)-translocating NADH-quinone reductase subunit F (405 aa).

A helical membrane pass occupies residues 3–23 (IILGIVMFTVIVLVLALMILF). Residues 32–124 (GDITIKVNGE…DMDIEVPEEV (93 aa)) enclose the 2Fe-2S ferredoxin-type domain. Positions 67, 73, 76, and 108 each coordinate [2Fe-2S] cluster. One can recognise an FAD-binding FR-type domain in the interval 127 to 267 (VKKWECTVIS…SGPFGEFFAK (141 aa)). The tract at residues 270–387 (DAEMVFIGGG…PIMNQSVIKM (118 aa)) is catalytic.

The protein belongs to the NqrF family. In terms of assembly, composed of six subunits; NqrA, NqrB, NqrC, NqrD, NqrE and NqrF. It depends on [2Fe-2S] cluster as a cofactor. The cofactor is FAD.

The protein resides in the cell inner membrane. The catalysed reaction is a ubiquinone + n Na(+)(in) + NADH + H(+) = a ubiquinol + n Na(+)(out) + NAD(+). Functionally, NQR complex catalyzes the reduction of ubiquinone-1 to ubiquinol by two successive reactions, coupled with the transport of Na(+) ions from the cytoplasm to the periplasm. The first step is catalyzed by NqrF, which accepts electrons from NADH and reduces ubiquinone-1 to ubisemiquinone by a one-electron transfer pathway. This chain is Na(+)-translocating NADH-quinone reductase subunit F, found in Neisseria meningitidis serogroup B (strain ATCC BAA-335 / MC58).